Reading from the N-terminus, the 258-residue chain is Polysialic acid transport protein KpsM (258 aa).

Residues 30–251 (LGYLWAILEP…FIGLALYRTR (222 aa)) form the ABC transmembrane type-2 domain. A run of 6 helical transmembrane segments spans residues 33 to 53 (LWAI…FGYI), 61 to 81 (ISFP…SSIS), 110 to 130 (ALLE…IVWM), 144 to 164 (VLTW…FMVV), 175 to 195 (LPIL…LHSI), and 227 to 247 (GVSL…GLAL).

The protein belongs to the ABC-2 integral membrane protein family.

The protein localises to the cell inner membrane. In terms of biological role, kpsM and KpsT constitute a system for the transport of polysialic acid across the cytoplasmic membrane. This is Polysialic acid transport protein KpsM (kpsM) from Escherichia coli.